A 403-amino-acid chain; its full sequence is Cysteine desulfurase IscS (403 aa).

Residues 73–74, N153, Q181, and 201–203 contribute to the pyridoxal 5'-phosphate site; these read AT and SAH. K204 carries the post-translational modification N6-(pyridoxal phosphate)lysine. Residue T241 participates in pyridoxal 5'-phosphate binding. The active-site Cysteine persulfide intermediate is the C326. Residue C326 coordinates [2Fe-2S] cluster.

It belongs to the class-V pyridoxal-phosphate-dependent aminotransferase family. NifS/IscS subfamily. As to quaternary structure, homodimer. Forms a heterotetramer with IscU, interacts with other sulfur acceptors. Pyridoxal 5'-phosphate serves as cofactor.

It localises to the cytoplasm. It carries out the reaction (sulfur carrier)-H + L-cysteine = (sulfur carrier)-SH + L-alanine. It functions in the pathway cofactor biosynthesis; iron-sulfur cluster biosynthesis. Functionally, master enzyme that delivers sulfur to a number of partners involved in Fe-S cluster assembly, tRNA modification or cofactor biosynthesis. Catalyzes the removal of elemental sulfur atoms from cysteine to produce alanine. Functions as a sulfur delivery protein for Fe-S cluster synthesis onto IscU, an Fe-S scaffold assembly protein, as well as other S acceptor proteins. The sequence is that of Cysteine desulfurase IscS from Methylococcus capsulatus (strain ATCC 33009 / NCIMB 11132 / Bath).